The primary structure comprises 239 residues: Segregation and condensation protein A (239 aa).

This sequence belongs to the ScpA family. In terms of assembly, component of a cohesin-like complex composed of ScpA, ScpB and the Smc homodimer, in which ScpA and ScpB bind to the head domain of Smc. The presence of the three proteins is required for the association of the complex with DNA.

It localises to the cytoplasm. In terms of biological role, participates in chromosomal partition during cell division. May act via the formation of a condensin-like complex containing Smc and ScpB that pull DNA away from mid-cell into both cell halves. The sequence is that of Segregation and condensation protein A from Streptococcus suis (strain 98HAH33).